The chain runs to 156 residues: Putative pre-16S rRNA nuclease (156 aa).

Belongs to the YqgF nuclease family.

It localises to the cytoplasm. Its function is as follows. Could be a nuclease involved in processing of the 5'-end of pre-16S rRNA. In Ehrlichia ruminantium (strain Welgevonden), this protein is Putative pre-16S rRNA nuclease.